Reading from the N-terminus, the 202-residue chain is UPF0301 protein ML0028 (202 aa).

It belongs to the UPF0301 (AlgH) family.

This Mycobacterium leprae (strain TN) protein is UPF0301 protein ML0028.